A 131-amino-acid polypeptide reads, in one-letter code: Small ribosomal subunit protein uS8 (131 aa).

The protein belongs to the universal ribosomal protein uS8 family. In terms of assembly, part of the 30S ribosomal subunit. Contacts proteins S5 and S12.

In terms of biological role, one of the primary rRNA binding proteins, it binds directly to 16S rRNA central domain where it helps coordinate assembly of the platform of the 30S subunit. This is Small ribosomal subunit protein uS8 from Bordetella parapertussis (strain 12822 / ATCC BAA-587 / NCTC 13253).